The chain runs to 204 residues: N-(5'-phosphoribosyl)anthranilate isomerase (204 aa).

The protein belongs to the TrpF family.

It carries out the reaction N-(5-phospho-beta-D-ribosyl)anthranilate = 1-(2-carboxyphenylamino)-1-deoxy-D-ribulose 5-phosphate. It participates in amino-acid biosynthesis; L-tryptophan biosynthesis; L-tryptophan from chorismate: step 3/5. The protein is N-(5'-phosphoribosyl)anthranilate isomerase of Bacillus cereus (strain Q1).